Reading from the N-terminus, the 122-residue chain is Holo-[acyl-carrier-protein] synthase (122 aa).

2 residues coordinate Mg(2+): D9 and E58.

The protein belongs to the P-Pant transferase superfamily. AcpS family. It depends on Mg(2+) as a cofactor.

The protein localises to the cytoplasm. It catalyses the reaction apo-[ACP] + CoA = holo-[ACP] + adenosine 3',5'-bisphosphate + H(+). In terms of biological role, transfers the 4'-phosphopantetheine moiety from coenzyme A to a Ser of acyl-carrier-protein. This Chlamydia pneumoniae (Chlamydophila pneumoniae) protein is Holo-[acyl-carrier-protein] synthase.